Here is a 125-residue protein sequence, read N- to C-terminus: Immunoglobulin heavy variable 4-39 (125 aa).

An N-terminal signal peptide occupies residues 1–26; it reads MDLMCKKMKHLWFFLLLVAAPRWVLS. Positions 27-51 are framework-1; the sequence is QLQLQESGPGLVKPSETLSLTCTVS. The Ig-like domain occupies 27–125; it reads QLQLQESGPG…ADTAVYYCAR (99 aa). C48 and C123 are oxidised to a cystine. Residues 52 to 61 are complementarity-determining-1; that stretch reads GGSISSSSYY. Residues 62 to 78 are framework-2; the sequence is WGWIRQPPGKGLEWIGS. The complementarity-determining-2 stretch occupies residues 79 to 85; the sequence is IYYSGST. The framework-3 stretch occupies residues 86-123; the sequence is YYNPSLKSRVTISVDTSKNQFSLKLSSVTAADTAVYYC. The complementarity-determining-3 stretch occupies residues 124 to 125; the sequence is AR.

As to quaternary structure, immunoglobulins are composed of two identical heavy chains and two identical light chains; disulfide-linked.

Its subcellular location is the secreted. It localises to the cell membrane. Functionally, v region of the variable domain of immunoglobulin heavy chains that participates in the antigen recognition. Immunoglobulins, also known as antibodies, are membrane-bound or secreted glycoproteins produced by B lymphocytes. In the recognition phase of humoral immunity, the membrane-bound immunoglobulins serve as receptors which, upon binding of a specific antigen, trigger the clonal expansion and differentiation of B lymphocytes into immunoglobulins-secreting plasma cells. Secreted immunoglobulins mediate the effector phase of humoral immunity, which results in the elimination of bound antigens. The antigen binding site is formed by the variable domain of one heavy chain, together with that of its associated light chain. Thus, each immunoglobulin has two antigen binding sites with remarkable affinity for a particular antigen. The variable domains are assembled by a process called V-(D)-J rearrangement and can then be subjected to somatic hypermutations which, after exposure to antigen and selection, allow affinity maturation for a particular antigen. This chain is Immunoglobulin heavy variable 4-39, found in Homo sapiens (Human).